The following is a 388-amino-acid chain: Probable aspartic-type endopeptidase MCYG_06955 (388 aa).

Positions 1–21 (MMGPFFYFTAYVSLLFAFTQA) are cleaved as a signal peptide. N-linked (GlcNAc...) asparagine glycans are attached at residues Asn-82 and Asn-104. Residues 96 to 384 (FVNEITVGND…DYDGPKIGFA (289 aa)) enclose the Peptidase A1 domain. Asp-112 is a catalytic residue. 2 N-linked (GlcNAc...) asparagine glycosylation sites follow: Asn-209 and Asn-261. Asp-278 is a catalytic residue. Residues Asn-315 and Asn-320 are each glycosylated (N-linked (GlcNAc...) asparagine).

Belongs to the peptidase A1 family.

It localises to the secreted. Functionally, probable aspartic-type endopeptidase which contributes to virulence. The chain is Probable aspartic-type endopeptidase MCYG_06955 from Arthroderma otae (strain ATCC MYA-4605 / CBS 113480) (Microsporum canis).